The chain runs to 546 residues: Low-affinity methionine permease (546 aa).

Topologically, residues 1 to 70 (MEPLLFNSGK…QGRHLGVFST (70 aa)) are extracellular. The helical transmembrane segment at 71 to 91 (VVLFVSRIMGSGIFAVPSVIL) threads the bilayer. Residues 92–98 (LNTGGNK) are Cytoplasmic-facing. A helical transmembrane segment spans residues 99-119 (LIYFAIWVFSAAIAFAGLYLF). Residues 120–148 (LEFGSWIPKSGGRKNFLERSFERPRLLIS) lie on the Extracellular side of the membrane. A helical membrane pass occupies residues 149-169 (VVFSCYSVLTGYALTGSIVFG). At 170 to 188 (KYVLSAFGVTDDSWSKYVS) the chain is on the cytoplasmic side. Residues 189-209 (ISFIIFAVLIHGVSVRHGVFI) traverse the membrane as a helical segment. Topologically, residues 210-213 (QNAL) are extracellular. Residues 214-234 (GGLKLIMIVLMCFAGLYTLFF) traverse the membrane as a helical segment. The Cytoplasmic portion of the chain corresponds to 235–254 (YKSTGQVAWDLPVTQVEKDS). A helical transmembrane segment spans residues 255 to 275 (LLSVSSIATAFISSFFCFSGW). Over 276-297 (DTVHTVTSEIKNPVKTLKVSGP) the chain is Extracellular. Residues 298–318 (LSLIICFVCYTMMNVAYLKVL) traverse the membrane as a helical segment. Position 319 (Thr319) is a topological domain, cytoplasmic. The helical transmembrane segment at 320–340 (YEEIVSAGPLVGSVLFTKLFG) threads the bilayer. Over 341–346 (PRVGGK) the chain is Extracellular. Residues 347-367 (FIAFSIAISAASNILVVIYSI) form a helical membrane-spanning segment. Topologically, residues 368-393 (SRVNQEIFKEGYLPFSIHMSKNWPFD) are cytoplasmic. The chain crosses the membrane as a helical span at residues 394-414 (APLPSISLCGFITIAWILILP). Topologically, residues 415–423 (KEGESFNYL) are extracellular. A helical membrane pass occupies residues 424–444 (VSMDGYGNQFFLLLVAIGLFI). Residues 445–459 (WRFKHKNEVPEIRAS) are Cytoplasmic-facing. Residues 460–480 (TFGVLAIITLSLYMLMAPFFA) traverse the membrane as a helical segment. Over 481–494 (DPSLNRVGFLPPYQ) the chain is Extracellular. The chain crosses the membrane as a helical span at residues 495 to 515 (IMSLLVIVACFFFWLVKFVLL). The Cytoplasmic segment spans residues 516–546 (PKFFHYKLLPKITYLHDGLIVTEWVKKPCLC).

The protein to yeast high affinity methionine permease (MUP1).

It localises to the membrane. In terms of biological role, very low affinity permease for methionine. The protein is Low-affinity methionine permease (MUP3) of Saccharomyces cerevisiae (strain ATCC 204508 / S288c) (Baker's yeast).